Consider the following 343-residue polypeptide: 4-hydroxyproline 2-epimerase 1 (343 aa).

Ser90 (proton acceptor) is an active-site residue. Substrate contacts are provided by residues 91 to 92 (GS), Asp251, and 256 to 257 (GT).

It belongs to the proline racemase family.

It catalyses the reaction trans-4-hydroxy-L-proline = cis-4-hydroxy-D-proline. Functionally, catalyzes the epimerization of trans-4-hydroxy-L-proline (t4LHyp) to cis-4-hydroxy-D-proline (c4DHyp) in vitro, albeit with low efficiency. The physiological substrate may be different. Displays no proline racemase activity. This Brucella anthropi (strain ATCC 49188 / DSM 6882 / CCUG 24695 / JCM 21032 / LMG 3331 / NBRC 15819 / NCTC 12168 / Alc 37) (Ochrobactrum anthropi) protein is 4-hydroxyproline 2-epimerase 1.